Reading from the N-terminus, the 394-residue chain is Argininosuccinate synthase (394 aa).

ATP is bound at residue 8–16 (AYSGGLDTS). L-citrulline-binding residues include Y86 and S91. Residue G116 participates in ATP binding. L-aspartate-binding residues include T118, N122, and D123. An L-citrulline-binding site is contributed by N122. Residues R126, S172, S181, E256, and Y268 each coordinate L-citrulline.

Belongs to the argininosuccinate synthase family. Type 1 subfamily. Homotetramer.

The protein localises to the cytoplasm. It carries out the reaction L-citrulline + L-aspartate + ATP = 2-(N(omega)-L-arginino)succinate + AMP + diphosphate + H(+). Its pathway is amino-acid biosynthesis; L-arginine biosynthesis; L-arginine from L-ornithine and carbamoyl phosphate: step 2/3. The polypeptide is Argininosuccinate synthase (Methanococcoides burtonii (strain DSM 6242 / NBRC 107633 / OCM 468 / ACE-M)).